Reading from the N-terminus, the 508-residue chain is Maturase K (508 aa).

It belongs to the intron maturase 2 family. MatK subfamily.

It is found in the plastid. The protein resides in the chloroplast. Usually encoded in the trnK tRNA gene intron. Probably assists in splicing its own and other chloroplast group II introns. The polypeptide is Maturase K (Ranunculus trichophyllus (Whitewater crowfoot)).